The following is a 206-amino-acid chain: FMN-dependent NADH:quinone oxidoreductase (206 aa).

FMN is bound by residues 15 to 17 (SVS), 94 to 97 (MYNF), and 138 to 141 (TRGG).

This sequence belongs to the azoreductase type 1 family. As to quaternary structure, homodimer. FMN is required as a cofactor.

It carries out the reaction 2 a quinone + NADH + H(+) = 2 a 1,4-benzosemiquinone + NAD(+). The enzyme catalyses N,N-dimethyl-1,4-phenylenediamine + anthranilate + 2 NAD(+) = 2-(4-dimethylaminophenyl)diazenylbenzoate + 2 NADH + 2 H(+). Quinone reductase that provides resistance to thiol-specific stress caused by electrophilic quinones. Its function is as follows. Also exhibits azoreductase activity. Catalyzes the reductive cleavage of the azo bond in aromatic azo compounds to the corresponding amines. This is FMN-dependent NADH:quinone oxidoreductase from Rhizobium meliloti (strain 1021) (Ensifer meliloti).